The chain runs to 301 residues: Thymidylate synthase (301 aa).

DUMP-binding positions include Arg38 and Arg163–Arg164. The active-site Nucleophile is the Cys183. Residues Arg203–Asp206, Asn214, and His244–Tyr246 contribute to the dUMP site. Asp206 is a (6R)-5,10-methylene-5,6,7,8-tetrahydrofolate binding site. Ala300 provides a ligand contact to (6R)-5,10-methylene-5,6,7,8-tetrahydrofolate.

The protein belongs to the thymidylate synthase family. Homodimer.

It carries out the reaction dUMP + (6R)-5,10-methylene-5,6,7,8-tetrahydrofolate = 7,8-dihydrofolate + dTMP. The protein operates within pyrimidine metabolism; dTTP biosynthesis. Its function is as follows. Catalyzes the reductive methylation of deoxyuridylate to thymidylate. The protein is Thymidylate synthase of Varicella-zoster virus (strain Dumas) (HHV-3).